A 341-amino-acid polypeptide reads, in one-letter code: tRNA N6-adenosine threonylcarbamoyltransferase (341 aa).

Positions 113 and 117 each coordinate Fe cation. Residues Leu-141–Gly-145, Asp-174, Gly-187, and Asn-282 each bind substrate. Asp-310 provides a ligand contact to Fe cation.

This sequence belongs to the KAE1 / TsaD family. Fe(2+) is required as a cofactor.

Its subcellular location is the cytoplasm. It carries out the reaction L-threonylcarbamoyladenylate + adenosine(37) in tRNA = N(6)-L-threonylcarbamoyladenosine(37) in tRNA + AMP + H(+). Functionally, required for the formation of a threonylcarbamoyl group on adenosine at position 37 (t(6)A37) in tRNAs that read codons beginning with adenine. Is involved in the transfer of the threonylcarbamoyl moiety of threonylcarbamoyl-AMP (TC-AMP) to the N6 group of A37, together with TsaE and TsaB. TsaD likely plays a direct catalytic role in this reaction. The protein is tRNA N6-adenosine threonylcarbamoyltransferase of Porphyromonas gingivalis (strain ATCC BAA-308 / W83).